The primary structure comprises 152 residues: Transcriptional regulator MraZ (152 aa).

SpoVT-AbrB domains lie at 5–52 and 81–124; these read ASAI…PLDE and AHEC…DEAA.

Belongs to the MraZ family. Forms oligomers.

The protein localises to the cytoplasm. It localises to the nucleoid. In Shewanella violacea (strain JCM 10179 / CIP 106290 / LMG 19151 / DSS12), this protein is Transcriptional regulator MraZ.